Reading from the N-terminus, the 654-residue chain is Arrestin domain-containing protein C (654 aa).

The region spanning 1-105 (MTQRSLKINI…AKRNLMDQWL (105 aa)) is the C2 domain. The stretch at 616 to 647 (AKRIFLKIQQIQSERQKQQEQQEQQVVSNLEA) forms a coiled coil.

This sequence belongs to the arrestin family.

The polypeptide is Arrestin domain-containing protein C (adcC) (Dictyostelium discoideum (Social amoeba)).